Reading from the N-terminus, the 36-residue chain is uncharacterized protein (36 aa).

This is an uncharacterized protein from Haemophilus influenzae (strain ATCC 51907 / DSM 11121 / KW20 / Rd).